A 369-amino-acid chain; its full sequence is Anhydro-N-acetylmuramic acid kinase (369 aa).

Position 12–19 (12–19 (GTSLDGVD)) interacts with ATP.

This sequence belongs to the anhydro-N-acetylmuramic acid kinase family.

It carries out the reaction 1,6-anhydro-N-acetyl-beta-muramate + ATP + H2O = N-acetyl-D-muramate 6-phosphate + ADP + H(+). The protein operates within amino-sugar metabolism; 1,6-anhydro-N-acetylmuramate degradation. It participates in cell wall biogenesis; peptidoglycan recycling. Its function is as follows. Catalyzes the specific phosphorylation of 1,6-anhydro-N-acetylmuramic acid (anhMurNAc) with the simultaneous cleavage of the 1,6-anhydro ring, generating MurNAc-6-P. Is required for the utilization of anhMurNAc either imported from the medium or derived from its own cell wall murein, and thus plays a role in cell wall recycling. The chain is Anhydro-N-acetylmuramic acid kinase from Shigella boydii serotype 4 (strain Sb227).